Consider the following 119-residue polypeptide: Holo-[acyl-carrier-protein] synthase (119 aa).

Residues aspartate 8 and glutamate 58 each coordinate Mg(2+).

This sequence belongs to the P-Pant transferase superfamily. AcpS family. It depends on Mg(2+) as a cofactor.

The protein localises to the cytoplasm. The catalysed reaction is apo-[ACP] + CoA = holo-[ACP] + adenosine 3',5'-bisphosphate + H(+). Transfers the 4'-phosphopantetheine moiety from coenzyme A to a Ser of acyl-carrier-protein. This chain is Holo-[acyl-carrier-protein] synthase, found in Streptococcus thermophilus (strain CNRZ 1066).